A 429-amino-acid polypeptide reads, in one-letter code: UDP-N-acetylglucosamine 1-carboxyvinyltransferase (429 aa).

22-23 is a binding site for phosphoenolpyruvate; sequence KN. Arginine 96 contributes to the UDP-N-acetyl-alpha-D-glucosamine binding site. Cysteine 120 serves as the catalytic Proton donor. Cysteine 120 carries the post-translational modification 2-(S-cysteinyl)pyruvic acid O-phosphothioketal. UDP-N-acetyl-alpha-D-glucosamine-binding positions include 125–129, aspartate 310, and isoleucine 332; that span reads RPVDL.

This sequence belongs to the EPSP synthase family. MurA subfamily.

It localises to the cytoplasm. The enzyme catalyses phosphoenolpyruvate + UDP-N-acetyl-alpha-D-glucosamine = UDP-N-acetyl-3-O-(1-carboxyvinyl)-alpha-D-glucosamine + phosphate. Its pathway is cell wall biogenesis; peptidoglycan biosynthesis. In terms of biological role, cell wall formation. Adds enolpyruvyl to UDP-N-acetylglucosamine. In Caulobacter vibrioides (strain ATCC 19089 / CIP 103742 / CB 15) (Caulobacter crescentus), this protein is UDP-N-acetylglucosamine 1-carboxyvinyltransferase.